The primary structure comprises 141 residues: MKENDVVLKTVTKIVVFILLTFGFYLFLAGHNNPGGGFIGGLVFSSAFLLMFLAFDVKQVLVALPLDFRILMICGSLLSFLTAVVPMFFGKPFLYQTDAYVQLPLLGEVHLTTVTVFEAGIVLAVVGVVVTVMLSISGGRS.

4 helical membrane passes run 10–30 (TVTK…FLAG), 35–55 (GGGF…FLAF), 70–90 (ILMI…MFFG), and 116–136 (VFEA…MLSI).

Belongs to the CPA3 antiporters (TC 2.A.63) subunit B family. In terms of assembly, may form a heterooligomeric complex that consists of seven subunits: mnhA2, mnhB2, mnhC2, mnhD2, mnhE2, mnhF2 and mnhG2.

It localises to the cell membrane. The chain is Putative antiporter subunit mnhB2 (mnhB2) from Staphylococcus saprophyticus subsp. saprophyticus (strain ATCC 15305 / DSM 20229 / NCIMB 8711 / NCTC 7292 / S-41).